We begin with the raw amino-acid sequence, 128 residues long: uncharacterized protein (128 aa).

It belongs to the HesB/IscA family.

This is an uncharacterized protein from Buchnera aphidicola subsp. Baizongia pistaciae (strain Bp).